The sequence spans 174 residues: Adenylate kinase (174 aa).

Positions 12–41 (STGDMLRAAIKAGTPLGLEAKKIIDEGGLV) are NMP. AMP contacts are provided by residues Thr-13, Arg-18, 39-41 (GLV), 67-70 (GFPR), and Gln-74. An LID region spans residues 104–141 (GRRVHLASGRTYHVTYNPPKVEGKDDVTGEDLIQRDDD). ATP contacts are provided by residues Arg-105 and 114–115 (TY). 2 residues coordinate AMP: Arg-138 and Arg-149.

This sequence belongs to the adenylate kinase family. Monomer.

The protein resides in the cytoplasm. It catalyses the reaction AMP + ATP = 2 ADP. Its pathway is purine metabolism; AMP biosynthesis via salvage pathway; AMP from ADP: step 1/1. In terms of biological role, catalyzes the reversible transfer of the terminal phosphate group between ATP and AMP. Plays an important role in cellular energy homeostasis and in adenine nucleotide metabolism. This Neisseria cinerea protein is Adenylate kinase.